The following is a 64-amino-acid chain: Disintegrin VLO5A (64 aa).

One can recognise a Disintegrin domain in the interval 1–64 (NSGNPCCDPV…SDCPRNPYKD (64 aa)). 4 disulfides stabilise this stretch: cysteine 6–cysteine 29, cysteine 20–cysteine 26, cysteine 25–cysteine 50, and cysteine 38–cysteine 57. The short motif at 42 to 44 (VGD) is the Cell attachment site; atypical (VGD) element.

Belongs to the venom metalloproteinase (M12B) family. P-II subfamily. P-IIe sub-subfamily. Heterodimer with VLO5B; disulfide-linked. In terms of tissue distribution, expressed by the venom gland.

Its subcellular location is the secreted. Functionally, poor inhibitor of platelet aggregation. The disintegrin inhibits the adhesion of the alpha-4/beta-1 (ITGA4/ITGB1) integrin to VCAM-1. Inhibition on alpha-IIb/beta-3 (ITGA2B/ITGB3) is low. The sequence is that of Disintegrin VLO5A from Macrovipera lebetina obtusa (Levant blunt-nosed viper).